The following is a 350-amino-acid chain: Uroporphyrinogen decarboxylase (350 aa).

Residues 27-31 (RQAGR), phenylalanine 46, aspartate 76, tyrosine 152, serine 207, and histidine 321 each bind substrate.

Belongs to the uroporphyrinogen decarboxylase family. In terms of assembly, homodimer.

It is found in the cytoplasm. It catalyses the reaction uroporphyrinogen III + 4 H(+) = coproporphyrinogen III + 4 CO2. The protein operates within porphyrin-containing compound metabolism; protoporphyrin-IX biosynthesis; coproporphyrinogen-III from 5-aminolevulinate: step 4/4. In terms of biological role, catalyzes the decarboxylation of four acetate groups of uroporphyrinogen-III to yield coproporphyrinogen-III. This is Uroporphyrinogen decarboxylase from Listeria monocytogenes serotype 4a (strain HCC23).